The chain runs to 473 residues: MKTDTPSLETPQAARLRRRQLIRQLLERDKTPLAILFMAAVVGTLVGLAAVAFDKGVAWLQNQRMGALVHTADNYPLLLTVAFLCSAVLAMFGYFLVRKYAPEAGGSGIPEIEGALEDQRPVRWWRVLPVKFFGGLGTLGGGMGLGREGPTVQIGGNISRMVLDIFRLKGDEARHTLLATGAAAGLAAAFNAPLAGILFIIEEMRPQFRYTLISIKAVFIGVIMSTIMYRIFNHEVALIDVGKLSDAPLNTLWLYLILGIIFGIFGPIFNKWVLGMQDLLHRVHGGNITKWVLMGGAIGGLCGLLGFVAPATSGGGFNLIPIATAGNFSMGMLVFIFVARVITTLLCFSSGAPGGIFAPMLALGTVLGTAFGMVAVELFPQYHLEAGTFAIAGMGALLAASIRAPLTGIILVLEMTDNYQLILPMIITGLGATLLAQFTGGKPLYSAILARTLAKQEAEQLARSKAASASENT.

The Cytoplasmic segment spans residues 1-32; it reads MKTDTPSLETPQAARLRRRQLIRQLLERDKTP. A helical membrane pass occupies residues 33–69; the sequence is LAILFMAAVVGTLVGLAAVAFDKGVAWLQNQRMGALV. The Periplasmic segment spans residues 70 to 76; that stretch reads HTADNYP. A helical membrane pass occupies residues 77–100; the sequence is LLLTVAFLCSAVLAMFGYFLVRKY. The Selectivity filter part_1 signature appears at 106 to 110; that stretch reads GSGIP. Ser-107 is a chloride binding site. The helical intramembrane region spans 109–116; the sequence is IPEIEGAL. Residues 117–123 lie on the Cytoplasmic side of the membrane; sequence EDQRPVR. 2 consecutive transmembrane segments (helical) span residues 124-141 and 148-166; these read WWRV…TLGG and EGPT…LDIF. Residues 146–150 carry the Selectivity filter part_2 motif; that stretch reads GREGP. At 167–176 the chain is on the cytoplasmic side; that stretch reads RLKGDEARHT. 2 intramembrane regions (helical) span residues 177–189 and 193–201; these read LLAT…LAAA and PLAGILFII. Over 202–214 the chain is Cytoplasmic; that stretch reads EEMRPQFRYTLIS. A helical transmembrane segment spans residues 215–232; it reads IKAVFIGVIMSTIMYRIF. Over 233–252 the chain is Periplasmic; that stretch reads NHEVALIDVGKLSDAPLNTL. Residues 253–281 form a helical membrane-spanning segment; the sequence is WLYLILGIIFGIFGPIFNKWVLGMQDLLH. The Cytoplasmic portion of the chain corresponds to 282-287; sequence RVHGGN. The chain crosses the membrane as a helical span at residues 288-309; it reads ITKWVLMGGAIGGLCGLLGFVA. The Periplasmic segment spans residues 310 to 329; the sequence is PATSGGGFNLIPIATAGNFS. A run of 2 helical transmembrane segments spans residues 330-349 and 355-376; these read MGML…LCFS and GIFA…MVAV. The Selectivity filter part_3 motif lies at 355–359; sequence GIFAP. Chloride is bound by residues Ile-356 and Phe-357. At 377–386 the chain is on the periplasmic side; it reads ELFPQYHLEA. Residues 387–401 constitute an intramembrane region (helical); that stretch reads GTFAIAGMGALLAAS. An intramembrane region (note=Loop between two helices) is located at residues 402-404; it reads IRA. An intramembrane region (helical) is located at residues 405–416; sequence PLTGIILVLEMT. Positions 417 to 421 form an intramembrane region, note=Loop between two helices; that stretch reads DNYQL. The helical transmembrane segment at 422 to 438 threads the bilayer; it reads ILPMIITGLGATLLAQF. The Cytoplasmic segment spans residues 439–473; sequence TGGKPLYSAILARTLAKQEAEQLARSKAASASENT. Tyr-445 provides a ligand contact to chloride.

This sequence belongs to the chloride channel (TC 2.A.49) family. ClcA subfamily. In terms of assembly, homodimer.

It is found in the cell inner membrane. The catalysed reaction is 2 chloride(in) + H(+)(out) = 2 chloride(out) + H(+)(in). Proton-coupled chloride transporter. Functions as antiport system and exchanges two chloride ions for 1 proton. Probably acts as an electrical shunt for an outwardly-directed proton pump that is linked to amino acid decarboxylation, as part of the extreme acid resistance (XAR) response. This is H(+)/Cl(-) exchange transporter ClcA from Shigella flexneri serotype 5b (strain 8401).